The sequence spans 410 residues: Adenosylhomocysteinase (410 aa).

Residues Asp117 and Glu142 each contribute to the substrate site. 143 to 145 (TTT) is an NAD(+) binding site. The substrate site is built by Lys172 and Asp176. NAD(+)-binding positions include Asn177, 206–211 (GYGYCG), Glu229, 285–287 (AGH), and Asn332.

The protein belongs to the adenosylhomocysteinase family. It depends on NAD(+) as a cofactor.

It localises to the cytoplasm. The enzyme catalyses S-adenosyl-L-homocysteine + H2O = L-homocysteine + adenosine. Its pathway is amino-acid biosynthesis; L-homocysteine biosynthesis; L-homocysteine from S-adenosyl-L-homocysteine: step 1/1. Functionally, may play a key role in the regulation of the intracellular concentration of adenosylhomocysteine. The protein is Adenosylhomocysteinase of Thermoplasma volcanium (strain ATCC 51530 / DSM 4299 / JCM 9571 / NBRC 15438 / GSS1).